We begin with the raw amino-acid sequence, 102 residues long: EPIDERMAL PATTERNING FACTOR-like protein 9 (102 aa).

The signal sequence occupies residues 1–31; that stretch reads MKHEMMNIKPRCITIFFLLFALLLGNYVVQA. Cystine bridges form between Cys-65/Cys-98, Cys-70/Cys-77, and Cys-73/Cys-100.

It belongs to the plant cysteine rich small secretory peptide family. Epidermal patterning factor subfamily. In terms of assembly, interacts with ERECTA and TMM. Expressed in immature organs, including leaves, stems and flower buds, but not in roots, shoot apical meristem and petals. Detected in the mesophyll tissues but not in the epidermal tissues where stomata develop.

It localises to the secreted. It is found in the extracellular space. The protein resides in the apoplast. Positively regulates stomatal density and patterning. Acts by competing with EPF2 (AC Q8LC53) for the same receptors, ERECTA (AC Q42371) and TMM (AC Q9SSD1). Not cleaved by the protease CRSP (AC Q9LNU1). This chain is EPIDERMAL PATTERNING FACTOR-like protein 9, found in Arabidopsis thaliana (Mouse-ear cress).